Consider the following 118-residue polypeptide: Large ribosomal subunit protein bL20 (118 aa).

Belongs to the bacterial ribosomal protein bL20 family.

In terms of biological role, binds directly to 23S ribosomal RNA and is necessary for the in vitro assembly process of the 50S ribosomal subunit. It is not involved in the protein synthesizing functions of that subunit. This is Large ribosomal subunit protein bL20 from Thermosipho melanesiensis (strain DSM 12029 / CIP 104789 / BI429).